The primary structure comprises 301 residues: Sulfate adenylyltransferase subunit 2 (301 aa).

The segment at 279–301 (RQGRLIDRDEAGSMEKKKREGYF) is disordered.

Belongs to the PAPS reductase family. CysD subfamily. Sulfate-activating enzymes, NodP and NodQ, may be physically associated.

The enzyme catalyses sulfate + ATP + H(+) = adenosine 5'-phosphosulfate + diphosphate. Proposed to provide activated sulfate for transfer to nod factor. This is Sulfate adenylyltransferase subunit 2 (nodP) from Rhizobium sp. (strain N33).